Reading from the N-terminus, the 206-residue chain is Protein GrpE (206 aa).

Positions 1-10 (MTDPDLHQND) are enriched in basic and acidic residues. Positions 1–38 (MTDPDLHQNDPENPAQASEPVVSKPYIMPDDPETGSAE) are disordered.

Belongs to the GrpE family. As to quaternary structure, homodimer.

Its subcellular location is the cytoplasm. In terms of biological role, participates actively in the response to hyperosmotic and heat shock by preventing the aggregation of stress-denatured proteins, in association with DnaK and GrpE. It is the nucleotide exchange factor for DnaK and may function as a thermosensor. Unfolded proteins bind initially to DnaJ; upon interaction with the DnaJ-bound protein, DnaK hydrolyzes its bound ATP, resulting in the formation of a stable complex. GrpE releases ADP from DnaK; ATP binding to DnaK triggers the release of the substrate protein, thus completing the reaction cycle. Several rounds of ATP-dependent interactions between DnaJ, DnaK and GrpE are required for fully efficient folding. This is Protein GrpE from Bradyrhizobium sp. (strain ORS 278).